A 172-amino-acid chain; its full sequence is Adenine phosphoribosyltransferase (172 aa).

It belongs to the purine/pyrimidine phosphoribosyltransferase family. In terms of assembly, homodimer.

Its subcellular location is the cytoplasm. The enzyme catalyses AMP + diphosphate = 5-phospho-alpha-D-ribose 1-diphosphate + adenine. The protein operates within purine metabolism; AMP biosynthesis via salvage pathway; AMP from adenine: step 1/1. Catalyzes a salvage reaction resulting in the formation of AMP, that is energically less costly than de novo synthesis. The polypeptide is Adenine phosphoribosyltransferase (Gloeothece citriformis (strain PCC 7424) (Cyanothece sp. (strain PCC 7424))).